The following is a 159-amino-acid chain: Phosphopantetheine adenylyltransferase (159 aa).

T10 contacts substrate. Residues 10 to 11 (TF) and H18 each bind ATP. Positions 42, 74, and 88 each coordinate substrate. ATP contacts are provided by residues 89–91 (GLR), E99, and 124–130 (WSFISSS).

The protein belongs to the bacterial CoaD family. Homohexamer. The cofactor is Mg(2+).

The protein resides in the cytoplasm. The catalysed reaction is (R)-4'-phosphopantetheine + ATP + H(+) = 3'-dephospho-CoA + diphosphate. It functions in the pathway cofactor biosynthesis; coenzyme A biosynthesis; CoA from (R)-pantothenate: step 4/5. Functionally, reversibly transfers an adenylyl group from ATP to 4'-phosphopantetheine, yielding dephospho-CoA (dPCoA) and pyrophosphate. This chain is Phosphopantetheine adenylyltransferase, found in Salmonella agona (strain SL483).